Reading from the N-terminus, the 344-residue chain is Beta-1,4-galactosyltransferase 4 (344 aa).

Residues 1-12 are Cytoplasmic-facing; sequence MGCNPPYLLPYR. Residues 13–38 form a helical; Signal-anchor for type II membrane protein membrane-spanning segment; the sequence is LRLLLFFTLCLTVVGWVTSNYFVDPI. The Lumenal portion of the chain corresponds to 39–344; that stretch reads QVIPKAKVFM…NITVDFWTGV (306 aa). C77 and C118 are joined by a disulfide. Residues 129–133, 168–170, and 195–196 contribute to the UDP-alpha-D-galactose site; these read PHRNR, FNR, and VD. A disulfide bond links C189 and C208. D196 contacts Mn(2+). N-linked (GlcNAc...) asparagine glycosylation is present at N220. UDP-alpha-D-galactose is bound by residues Y224 and W256. 258–261 lines the N-acetyl-D-glucosamine pocket; it reads GEDD. H289 serves as a coordination point for Mn(2+). 289-291 is a binding site for UDP-alpha-D-galactose; that stretch reads HTR. Position 301 (R301) interacts with N-acetyl-D-glucosamine. N335 is a glycosylation site (N-linked (GlcNAc...) asparagine).

This sequence belongs to the glycosyltransferase 7 family. It depends on Mn(2+) as a cofactor.

The protein resides in the golgi apparatus. It is found in the golgi stack membrane. It carries out the reaction N-acetyl-D-glucosamine + UDP-alpha-D-galactose = beta-D-galactosyl-(1-&gt;4)-N-acetyl-D-glucosamine + UDP + H(+). The catalysed reaction is a beta-D-GlcNAc-(1-&gt;3)-beta-D-Gal-(1-&gt;4)-beta-D-Glc-(1&lt;-&gt;1)-Cer(d18:1(4E)) + UDP-alpha-D-galactose = a neolactoside nLc4Cer(d18:1(4E)) + UDP + H(+). Its pathway is protein modification; protein glycosylation. In terms of biological role, galactose (Gal) transferase involved in the biosynthesis of glycoproteins, proteoglycans, and glycosyphingolipids. Catalyzes the transfer of Gal residue via a beta1-&gt;4 linkage from UDP-Gal to the non-reducing terminal N-acetyl glucosamine 6-O-sulfate (6-O-sulfoGlcNAc) in the linearly growing chain of both N- and O-linked keratan sulfate proteoglycans. Cooperates with B3GNT7 N-acetyl glucosamine transferase and CHST6 and CHST1 sulfotransferases to construct and elongate mono- and disulfated disaccharide units [-&gt;3Galbeta1-&gt;4(6-sulfoGlcNAcbeta)1-&gt;] and [-&gt;3(6-sulfoGalbeta)1-&gt;4(6-sulfoGlcNAcbeta)1-&gt;] within keratan sulfate polymer. This is Beta-1,4-galactosyltransferase 4 (B4GALT4) from Cricetulus griseus (Chinese hamster).